Here is a 160-residue protein sequence, read N- to C-terminus: Large ribosomal subunit protein uL16 (160 aa).

Positions 138–160 (KNLEAPSQEKTKNSKKSQEEVKQ) are disordered.

The protein belongs to the universal ribosomal protein uL16 family. In terms of assembly, part of the 50S ribosomal subunit.

Binds 23S rRNA and is also seen to make contacts with the A and possibly P site tRNAs. The polypeptide is Large ribosomal subunit protein uL16 (Prochlorococcus marinus (strain MIT 9215)).